A 122-amino-acid chain; its full sequence is Large ribosomal subunit protein uL14 (122 aa).

Belongs to the universal ribosomal protein uL14 family. As to quaternary structure, part of the 50S ribosomal subunit. Forms a cluster with proteins L3 and L19. In the 70S ribosome, L14 and L19 interact and together make contacts with the 16S rRNA in bridges B5 and B8.

In terms of biological role, binds to 23S rRNA. Forms part of two intersubunit bridges in the 70S ribosome. In Granulibacter bethesdensis (strain ATCC BAA-1260 / CGDNIH1), this protein is Large ribosomal subunit protein uL14.